The chain runs to 217 residues: Large ribosomal subunit protein uL1 (217 aa).

Belongs to the universal ribosomal protein uL1 family. As to quaternary structure, part of the 50S ribosomal subunit.

Functionally, binds directly to 23S rRNA. Probably involved in E site tRNA release. In terms of biological role, protein L1 is also a translational repressor protein, it controls the translation of its operon by binding to its mRNA. This chain is Large ribosomal subunit protein uL1, found in Hyperthermus butylicus (strain DSM 5456 / JCM 9403 / PLM1-5).